A 548-amino-acid polypeptide reads, in one-letter code: Eukaryotic translation initiation factor 3 subunit D (548 aa).

The residue at position 53 (lysine 53) is an N6-acetyllysine. Serine 161 is subject to Phosphoserine. The interval 285–299 (DFDLLTVSETANEPP) is RNA gate. The segment at 523-548 (PDGTFSSDEDEEEEEEEEEEEEEEET) is disordered. Serine 528 and serine 529 each carry phosphoserine. A compositionally biased stretch (acidic residues) spans 529 to 548 (SDEDEEEEEEEEEEEEEEET).

It belongs to the eIF-3 subunit D family. In terms of assembly, component of the eukaryotic translation initiation factor 3 (eIF-3) complex, which is composed of 13 subunits: EIF3A, EIF3B, EIF3C, EIF3D, EIF3E, EIF3F, EIF3G, EIF3H, EIF3I, EIF3J, EIF3K, EIF3L and EIF3M. The eIF-3 complex appears to include 3 stable modules: module A is composed of EIF3A, EIF3B, EIF3G and EIF3I; module B is composed of EIF3F, EIF3H, and EIF3M; and module C is composed of EIF3C, EIF3D, EIF3E, EIF3K and EIF3L. EIF3C of module C binds EIF3B of module A and EIF3H of module B, thereby linking the three modules. EIF3J is a labile subunit that binds to the eIF-3 complex via EIF3B. The eIF-3 complex interacts with RPS6KB1 under conditions of nutrient depletion. Mitogenic stimulation leads to binding and activation of a complex composed of MTOR and RPTOR, leading to phosphorylation and release of RPS6KB1 and binding of EIF4B to eIF-3.

It is found in the cytoplasm. Functionally, mRNA cap-binding component of the eukaryotic translation initiation factor 3 (eIF-3) complex, a complex required for several steps in the initiation of protein synthesis of a specialized repertoire of mRNAs. The eIF-3 complex associates with the 40S ribosome and facilitates the recruitment of eIF-1, eIF-1A, eIF-2:GTP:methionyl-tRNAi and eIF-5 to form the 43S pre-initiation complex (43S PIC). The eIF-3 complex stimulates mRNA recruitment to the 43S PIC and scanning of the mRNA for AUG recognition. The eIF-3 complex is also required for disassembly and recycling of post-termination ribosomal complexes and subsequently prevents premature joining of the 40S and 60S ribosomal subunits prior to initiation. The eIF-3 complex specifically targets and initiates translation of a subset of mRNAs involved in cell proliferation, including cell cycling, differentiation and apoptosis, and uses different modes of RNA stem-loop binding to exert either translational activation or repression. In the eIF-3 complex, EIF3D specifically recognizes and binds the 7-methylguanosine cap of a subset of mRNAs. The sequence is that of Eukaryotic translation initiation factor 3 subunit D from Macaca fascicularis (Crab-eating macaque).